A 92-amino-acid polypeptide reads, in one-letter code: Large ribosomal subunit protein eL31 (92 aa).

This sequence belongs to the eukaryotic ribosomal protein eL31 family.

The chain is Large ribosomal subunit protein eL31 from Desulfurococcus amylolyticus (strain DSM 18924 / JCM 16383 / VKM B-2413 / 1221n) (Desulfurococcus kamchatkensis).